Reading from the N-terminus, the 487-residue chain is MTVQTAQIVKNYIGGEWVESISTKMEAVYNPATGEVIAQVPLSTKVDVEQAVLAANEAFKSWSKTAVPKRARILFKYQQLLVDNWEELAKLITIENGKSYNEAYGEVLRGIECVEFAAGAPTLMMGKQLPDIATGIESGMYRYPIGVIGGITPFNFPMMVPCWMFPLAIACGNTFVLKPSERTPLLAARLAELAEEAGLPKGVLNIVNGAHDVVNGLLEHKLVKAISFVGSQPVAEYVYKKGTENLKRVQALAGAKNHSIVLNDANLELATKQIISAAFGSAGERCMAASVVTVEEEIADQLVERLVAEANKIVIGNGLDEDVFLGPVIRDNHKERTIGYIDSGVEQGATLVRDGREDTAVKGAGYFVGPTIFDHVTKEMKIWQDEIFAPVLSIVRVKSLDEAIEIANESRFANGACIYTDSGASVRQFRETIESGMLGVNVGVPAPMAFFPFSGWKDSFYGDLHANGTDGVEFYTRKKMLTSRWEK.

Residues phenylalanine 154, lysine 178, glutamate 181, arginine 182, and serine 231 each contribute to the NAD(+) site. Cysteine 286 (nucleophile) is an active-site residue. Glutamate 386 is an NAD(+) binding site.

The protein belongs to the aldehyde dehydrogenase family. IolA subfamily. Homotetramer.

The catalysed reaction is 3-oxopropanoate + NAD(+) + CoA + H2O = hydrogencarbonate + acetyl-CoA + NADH + H(+). The enzyme catalyses 2-methyl-3-oxopropanoate + NAD(+) + CoA + H2O = propanoyl-CoA + hydrogencarbonate + NADH + H(+). It participates in polyol metabolism; myo-inositol degradation into acetyl-CoA; acetyl-CoA from myo-inositol: step 7/7. In terms of biological role, catalyzes the oxidation of malonate semialdehyde (MSA) and methylmalonate semialdehyde (MMSA) into acetyl-CoA and propanoyl-CoA, respectively. Is involved in a myo-inositol catabolic pathway. Bicarbonate, and not CO2, is the end-product of the enzymatic reaction. The protein is Malonate-semialdehyde dehydrogenase 2 of Bacillus thuringiensis subsp. konkukian (strain 97-27).